Here is a 397-residue protein sequence, read N- to C-terminus: MQEKIAVLAYSGGLDTSCCLKLLEDKYDYKVISVAVDVGQPEDDLKEPEEKAKKFGVLKHYTIDAKEEFAKDYIFRAIKANALYEGYPLSTALARPLIAIKIAELAQEVGASAISHGCTGKGNDQFRFESVMRAKTPEIEIVAPIRDLNLTRTEEIAYAKEKGIPVPVDLEKPFSIDENLWGRSIEGGILEDPMTETPKECFAWTVDPTDAQDKEEYVEIDFEEGVPVAINGDALEAVSLIRKVNEIAGRNGVGRVDIVEDRVLGLKSRENYECPGAMLLITAHKALEQLVLTREELVFKEMVDSKYADLVYKGLWHEPLRLDLDAFIDKTQTRMNGKVVLKLYKGSMRIAGRESKDAIYNEEMVSFENKEMDQREIVGMVKFHGLQAAIYEGLTRK.

9 to 17 (AYSGGLDTS) is a binding site for ATP. Position 87 (tyrosine 87) interacts with L-citrulline. Glycine 117 serves as a coordination point for ATP. Residues threonine 119, asparagine 123, and aspartate 124 each coordinate L-aspartate. L-citrulline is bound at residue asparagine 123. The L-citrulline site is built by arginine 127, serine 175, serine 184, glutamate 260, and tyrosine 272.

It belongs to the argininosuccinate synthase family. Type 1 subfamily. Homotetramer.

Its subcellular location is the cytoplasm. The enzyme catalyses L-citrulline + L-aspartate + ATP = 2-(N(omega)-L-arginino)succinate + AMP + diphosphate + H(+). Its pathway is amino-acid biosynthesis; L-arginine biosynthesis; L-arginine from L-ornithine and carbamoyl phosphate: step 2/3. The chain is Argininosuccinate synthase from Methanococcus maripaludis (strain DSM 14266 / JCM 13030 / NBRC 101832 / S2 / LL).